Here is an 80-residue protein sequence, read N- to C-terminus: Putative membrane protein insertion efficiency factor (80 aa).

The disordered stretch occupies residues 61-80; sequence KTGKDPVPDRFSLKRNQEGE. Over residues 62–80 the composition is skewed to basic and acidic residues; it reads TGKDPVPDRFSLKRNQEGE.

This sequence belongs to the UPF0161 family.

The protein resides in the cell membrane. Functionally, could be involved in insertion of integral membrane proteins into the membrane. This is Putative membrane protein insertion efficiency factor from Streptococcus pneumoniae (strain P1031).